The chain runs to 713 residues: Polyphosphate kinase (713 aa).

ATP is bound at residue Asn-63. Mg(2+) is bound by residues Arg-394 and Arg-424. His-454 acts as the Phosphohistidine intermediate in catalysis. Tyr-487, Arg-583, and His-611 together coordinate ATP.

It belongs to the polyphosphate kinase 1 (PPK1) family. The cofactor is Mg(2+). In terms of processing, an intermediate of this reaction is the autophosphorylated ppk in which a phosphate is covalently linked to a histidine residue through a N-P bond.

The enzyme catalyses [phosphate](n) + ATP = [phosphate](n+1) + ADP. In terms of biological role, catalyzes the reversible transfer of the terminal phosphate of ATP to form a long-chain polyphosphate (polyP). The chain is Polyphosphate kinase from Prosthecochloris aestuarii (strain DSM 271 / SK 413).